A 471-amino-acid polypeptide reads, in one-letter code: Uronate isomerase (471 aa).

It belongs to the metallo-dependent hydrolases superfamily. Uronate isomerase family.

It carries out the reaction D-glucuronate = D-fructuronate. The catalysed reaction is aldehydo-D-galacturonate = keto-D-tagaturonate. The protein operates within carbohydrate metabolism; pentose and glucuronate interconversion. The chain is Uronate isomerase from Latilactobacillus sakei subsp. sakei (strain 23K) (Lactobacillus sakei subsp. sakei).